Here is a 179-residue protein sequence, read N- to C-terminus: Large ribosomal subunit protein uL5 (179 aa).

The protein belongs to the universal ribosomal protein uL5 family. As to quaternary structure, part of the 50S ribosomal subunit; part of the 5S rRNA/L5/L18/L25 subcomplex. Contacts the 5S rRNA and the P site tRNA. Forms a bridge to the 30S subunit in the 70S ribosome.

Its function is as follows. This is one of the proteins that bind and probably mediate the attachment of the 5S RNA into the large ribosomal subunit, where it forms part of the central protuberance. In the 70S ribosome it contacts protein S13 of the 30S subunit (bridge B1b), connecting the 2 subunits; this bridge is implicated in subunit movement. Contacts the P site tRNA; the 5S rRNA and some of its associated proteins might help stabilize positioning of ribosome-bound tRNAs. This is Large ribosomal subunit protein uL5 from Anoxybacillus flavithermus (strain DSM 21510 / WK1).